The sequence spans 190 residues: Elongation factor P-like protein (190 aa).

This sequence belongs to the elongation factor P family.

The protein is Elongation factor P-like protein of Escherichia fergusonii (strain ATCC 35469 / DSM 13698 / CCUG 18766 / IAM 14443 / JCM 21226 / LMG 7866 / NBRC 102419 / NCTC 12128 / CDC 0568-73).